Consider the following 262-residue polypeptide: 1,2-epoxyphenylacetyl-CoA isomerase (262 aa).

It belongs to the enoyl-CoA hydratase/isomerase family.

It carries out the reaction 2-(1,2-epoxy-1,2-dihydrophenyl)acetyl-CoA = 2-oxepin-2(3H)-ylideneacetyl-CoA. Its pathway is aromatic compound metabolism; phenylacetate degradation. Catalyzes the reversible conversion of the epoxide to 2-oxepin-2(3H)-ylideneacetyl-CoA (oxepin-CoA). This Escherichia coli (strain K12) protein is 1,2-epoxyphenylacetyl-CoA isomerase (paaG).